Reading from the N-terminus, the 129-residue chain is Serum amyloid A-2 protein (129 aa).

The N-terminal stretch at 1 to 18 is a signal peptide; sequence MKLFTGLIFCSLVLGVHS. Glutamine 19 is subject to Pyrrolidone carboxylic acid. A compositionally biased stretch (basic and acidic residues) spans 90–103; sequence KHGDSGHGVEDSRA. A disordered region spans residues 90–129; that stretch reads KHGDSGHGVEDSRADQAANEWGRSGKDPNHFRPPGLPDKY.

Belongs to the SAA family. In terms of assembly, apolipoprotein of the HDL complex.

Its subcellular location is the secreted. Major acute phase reactant. This is Serum amyloid A-2 protein from Sus scrofa (Pig).